The primary structure comprises 343 residues: Protein RecA (343 aa).

ATP is bound at residue 65–72 (GPESSGKT).

Belongs to the RecA family.

Its subcellular location is the cytoplasm. Can catalyze the hydrolysis of ATP in the presence of single-stranded DNA, the ATP-dependent uptake of single-stranded DNA by duplex DNA, and the ATP-dependent hybridization of homologous single-stranded DNAs. It interacts with LexA causing its activation and leading to its autocatalytic cleavage. The protein is Protein RecA of Xanthomonas campestris pv. campestris (strain 8004).